Reading from the N-terminus, the 345-residue chain is Phosphate acyltransferase (345 aa).

It belongs to the PlsX family. Homodimer. Probably interacts with PlsY.

The protein localises to the cytoplasm. The catalysed reaction is a fatty acyl-[ACP] + phosphate = an acyl phosphate + holo-[ACP]. Its pathway is lipid metabolism; phospholipid metabolism. In terms of biological role, catalyzes the reversible formation of acyl-phosphate (acyl-PO(4)) from acyl-[acyl-carrier-protein] (acyl-ACP). This enzyme utilizes acyl-ACP as fatty acyl donor, but not acyl-CoA. The polypeptide is Phosphate acyltransferase (Wolbachia sp. subsp. Drosophila simulans (strain wRi)).